Consider the following 486-residue polypeptide: Glutamate--tRNA ligase 1 (486 aa).

Positions 9-19 (PSPTGMLHIGG) match the 'HIGH' region motif. The 'KMSKS' region signature appears at 259 to 263 (KLSKR). An ATP-binding site is contributed by K262.

Belongs to the class-I aminoacyl-tRNA synthetase family. Glutamate--tRNA ligase type 1 subfamily. Monomer.

The protein localises to the cytoplasm. The enzyme catalyses tRNA(Glu) + L-glutamate + ATP = L-glutamyl-tRNA(Glu) + AMP + diphosphate. Functionally, catalyzes the attachment of glutamate to tRNA(Glu) in a two-step reaction: glutamate is first activated by ATP to form Glu-AMP and then transferred to the acceptor end of tRNA(Glu). The sequence is that of Glutamate--tRNA ligase 1 from Hyphomonas neptunium (strain ATCC 15444).